The chain runs to 555 residues: Urocanate hydratase (555 aa).

Residues G52–G53, Q130, G176–G178, E196, R201, N242–A243, Q263–H267, Y273–L274, and Y322 contribute to the NAD(+) site. The active site involves C410. G492 provides a ligand contact to NAD(+).

This sequence belongs to the urocanase family. NAD(+) serves as cofactor.

The protein resides in the cytoplasm. It catalyses the reaction 4-imidazolone-5-propanoate = trans-urocanate + H2O. The protein operates within amino-acid degradation; L-histidine degradation into L-glutamate; N-formimidoyl-L-glutamate from L-histidine: step 2/3. Functionally, catalyzes the conversion of urocanate to 4-imidazolone-5-propionate. This chain is Urocanate hydratase, found in Shewanella baltica (strain OS155 / ATCC BAA-1091).